The chain runs to 804 residues: Phenylalanine--tRNA ligase beta subunit (804 aa).

The region spanning 38–148 (RAAFRAFTIA…ENAPVGTSFA (111 aa)) is the tRNA-binding domain. The region spanning 401–476 (HTARVIDFPV…RIHGINRIDP (76 aa)) is the B5 domain. Mg(2+) contacts are provided by Asp-454, Asp-460, Glu-463, and Glu-464. Residues 710-803 (SLFQSLKRDY…VAKQTGGVLR (94 aa)) form the FDX-ACB domain.

It belongs to the phenylalanyl-tRNA synthetase beta subunit family. Type 1 subfamily. As to quaternary structure, tetramer of two alpha and two beta subunits. Mg(2+) serves as cofactor.

It is found in the cytoplasm. The enzyme catalyses tRNA(Phe) + L-phenylalanine + ATP = L-phenylalanyl-tRNA(Phe) + AMP + diphosphate + H(+). This is Phenylalanine--tRNA ligase beta subunit from Brucella melitensis biotype 1 (strain ATCC 23456 / CCUG 17765 / NCTC 10094 / 16M).